A 950-amino-acid polypeptide reads, in one-letter code: Oxysterol-binding protein-related protein 1 (950 aa).

Positions 1–237 are interaction with RAB7A; that stretch reads MNTEAEQQLL…NKVIYKALKR (237 aa). ANK repeat units follow at residues 47 to 76, 80 to 109, and 175 to 204; these read LGWT…EVNV, MGDT…DTTI, and LGNT…DPNL. The 100-residue stretch at 235–334 folds into the PH domain; that stretch reads LKRYEGPLWK…WLEAIEEHSA (100 aa). Residues 430–463 are a coiled coil; the sequence is NFKLEQEQEKNKILSEALETLATEHHELEQSLVK. The FFAT signature appears at 469 to 485; it reads SILSEDEFYDALSDSES. A Phosphoserine modification is found at Ser499. Over residues 501–521 the composition is skewed to basic and acidic residues; that stretch reads EEEGEHLGSRKHRMSEEKDCG. Disordered regions lie at residues 501–527, 795–816, and 881–913; these read EEEG…DALS, KKNT…LDEM, and MENG…SEED. A coiled-coil region spans residues 877–913; the sequence is DIRAMENGEIDQASEEKKRLEEKQRAARKNRSKSEED. Residues 890–901 show a composition bias toward basic and acidic residues; it reads SEEKKRLEEKQR.

It belongs to the OSBP family. As to quaternary structure, interacts (via FFAT motif) with VAPA and VAPB. Interacts with the GTP-bound form of RAB7A. Interacts with OAS1B. Interacts (via FFAT motif) with MOSPD2 (via MSP domain).

Its subcellular location is the late endosome. In terms of biological role, binds phospholipids; exhibits strong binding to phosphatidic acid and weak binding to phosphatidylinositol 3-phosphate. Stabilizes GTP-bound RAB7A on late endosomes/lysosomes and alters functional properties of late endocytic compartments via its interaction with RAB7A. Binds 25-hydroxycholesterol and cholesterol. The sequence is that of Oxysterol-binding protein-related protein 1 from Homo sapiens (Human).